Here is a 307-residue protein sequence, read N- to C-terminus: Nodulation protein NoeC (307 aa).

8 consecutive transmembrane segments (helical) span residues 46–66, 91–111, 117–137, 140–160, 163–183, 212–232, 238–258, and 279–299; these read APLW…YVLN, SGLT…VCAI, LFAI…KVRG, VLDL…GATA, IPVP…LASI, IVAL…ELFV, AQGP…AYWI, and VTDG…VFLM.

It localises to the cell membrane. This chain is Nodulation protein NoeC (noeC), found in Azorhizobium caulinodans (strain ATCC 43989 / DSM 5975 / JCM 20966 / LMG 6465 / NBRC 14845 / NCIMB 13405 / ORS 571).